The primary structure comprises 175 residues: MTMCSGARLALLVYGIIMHNSVSCSPAAGLSFPGIRPEEEAYDQDGNPLQDFYDWDPPGAGSPASALRDAYALYYPADRRDVAHEILNEAYRKVLDQLSARKYLQSMVARGMGENLAAAAVDDRAPLTKRHSDGIFTDSYSRYRKQMAVKKYLAAVLGKRYKQRVKNKGRRIAYL.

An N-terminal signal peptide occupies residues 1-24 (MTMCSGARLALLVYGIIMHNSVSC). Residues 25–78 (SPAAGLSFPGIRPEEEAYDQDGNPLQDFYDWDPPGAGSPASALRDAYALYYPAD) constitute a propeptide that is removed on maturation. An important for receptor binding region spans residues 149 to 157 (VKKYLAAVL). Leucine 157 bears the Leucine amide mark. Lysine 168 carries the lysine amide modification. The propeptide occupies 172–175 (IAYL).

It belongs to the glucagon family.

It localises to the secreted. Its function is as follows. PACAP is a neuropeptide involved in diverse array of physiological processes through activating the PACAP subfamily of class B1 G protein-coupled receptors: VIP receptor 1 (VIPR1), VIP receptor 2 (VIPR2), and PACAP type I receptor (ADCYAP1R1). Exerts neuroprotective and general cytoprotective effects due to anti-apoptotic, anti-inflammatory, and antioxidant actions. Promotes neuron projection development through the RAPGEF2/Rap1/B-Raf/ERK pathway. In chromaffin cells, induces long-lasting increase of intracellular calcium concentrations and neuroendocrine secretion. Involved in the control of glucose homeostasis, induces insulin secretion by pancreatic beta cells. PACAP exists in two bioactive forms from proteolysis of the same precursor protein, PACAP27 and PACAP38, which differ by eleven amino acid residues in the C-terminus. In Rattus norvegicus (Rat), this protein is Pituitary adenylate cyclase-activating polypeptide (Adcyap1).